A 130-amino-acid chain; its full sequence is Small ribosomal subunit protein uS8 (130 aa).

Belongs to the universal ribosomal protein uS8 family. In terms of assembly, part of the 30S ribosomal subunit.

Functionally, one of the primary rRNA binding proteins, it binds directly to 16S rRNA central domain where it helps coordinate assembly of the platform of the 30S subunit. This chain is Small ribosomal subunit protein uS8, found in Methanocorpusculum labreanum (strain ATCC 43576 / DSM 4855 / Z).